A 259-amino-acid polypeptide reads, in one-letter code: Proteasome assembly chaperone 2 (259 aa).

It belongs to the PSMG2 family. As to quaternary structure, forms a heterodimer with psmg1. Post-translationally, degraded by the proteasome upon completion of 20S proteasome maturation.

It localises to the nucleus. Functionally, chaperone protein which promotes assembly of the 20S proteasome as part of a heterodimer with psmg1. This Xenopus laevis (African clawed frog) protein is Proteasome assembly chaperone 2.